We begin with the raw amino-acid sequence, 531 residues long: Probable protein phosphatase 2C 66 (531 aa).

The disordered stretch occupies residues 1–47 (MGSCLSSDLPPRAGAGAGASPGWPQRWRRRRQRGVERGGAVSGGGGG). The segment covering 10-25 (PPRAGAGAGASPGWPQ) has biased composition (low complexity). The region spanning 88 to 401 (AACLHTQQGR…DDCAVVCLFL (314 aa)) is the PPM-type phosphatase domain. Positions 123 and 124 each coordinate Mn(2+). Polar residues predominate over residues 151–172 (SANEDTSSHQNGSISGSVNSEE). The segment at 151 to 176 (SANEDTSSHQNGSISGSVNSEESPVV) is disordered. Mn(2+) contacts are provided by Asp346 and Asp392.

The protein belongs to the PP2C family. Mg(2+) is required as a cofactor. Mn(2+) serves as cofactor.

It catalyses the reaction O-phospho-L-seryl-[protein] + H2O = L-seryl-[protein] + phosphate. It carries out the reaction O-phospho-L-threonyl-[protein] + H2O = L-threonyl-[protein] + phosphate. In Oryza sativa subsp. japonica (Rice), this protein is Probable protein phosphatase 2C 66.